Here is a 348-residue protein sequence, read N- to C-terminus: Phosphate acyltransferase (348 aa).

This sequence belongs to the PlsX family. Homodimer. Probably interacts with PlsY.

It is found in the cytoplasm. The enzyme catalyses a fatty acyl-[ACP] + phosphate = an acyl phosphate + holo-[ACP]. The protein operates within lipid metabolism; phospholipid metabolism. Functionally, catalyzes the reversible formation of acyl-phosphate (acyl-PO(4)) from acyl-[acyl-carrier-protein] (acyl-ACP). This enzyme utilizes acyl-ACP as fatty acyl donor, but not acyl-CoA. The polypeptide is Phosphate acyltransferase (Pectobacterium atrosepticum (strain SCRI 1043 / ATCC BAA-672) (Erwinia carotovora subsp. atroseptica)).